Here is a 252-residue protein sequence, read N- to C-terminus: Phosphoribosyl-ATP pyrophosphatase (252 aa).

It belongs to the PRA-PH family.

The protein resides in the cytoplasm. The catalysed reaction is 1-(5-phospho-beta-D-ribosyl)-ATP + H2O = 1-(5-phospho-beta-D-ribosyl)-5'-AMP + diphosphate + H(+). It participates in amino-acid biosynthesis; L-histidine biosynthesis; L-histidine from 5-phospho-alpha-D-ribose 1-diphosphate: step 2/9. The protein is Phosphoribosyl-ATP pyrophosphatase of Magnetococcus marinus (strain ATCC BAA-1437 / JCM 17883 / MC-1).